We begin with the raw amino-acid sequence, 272 residues long: MLEQPIGVIDSGVGGLTVAKEIMRQLPKENIIYVGDTKRCPYGPRPEEEVLQYTWEMTDYLLENHHIKMLVIACNTATAIALEDIQRKTDIPVVGVIQPGARTAIKVTKNQHIGVIGTVNTIKSRAYEQALLGLNAELQVENTACPLLVPFVESGRFLQESAEEAVEASLEPLKGTSIDTLILGCTHYPILKDPIQNYMGEHVKIISSGDETAREVSTILSYKGLLNQSKHAPEHQFLTTGERNGFAKIAEDWFGHEIGHVECISLQEPVRK.

Residues 10–11 (DS) and 42–43 (YG) contribute to the substrate site. The Proton donor/acceptor role is filled by Cys-74. Residue 75–76 (NT) participates in substrate binding. The Proton donor/acceptor role is filled by Cys-185. 186-187 (TH) provides a ligand contact to substrate.

The protein belongs to the aspartate/glutamate racemases family.

The enzyme catalyses L-glutamate = D-glutamate. Its pathway is cell wall biogenesis; peptidoglycan biosynthesis. Its function is as follows. Provides the (R)-glutamate required for cell wall biosynthesis. The chain is Glutamate racemase from Bacillus velezensis (strain DSM 23117 / BGSC 10A6 / LMG 26770 / FZB42) (Bacillus amyloliquefaciens subsp. plantarum).